A 364-amino-acid chain; its full sequence is tRNA N6-adenosine threonylcarbamoyltransferase (364 aa).

The Fe cation site is built by His-115 and His-119. Substrate-binding positions include 137–141 (LVSGG), Asp-170, Gly-183, and Asn-288. A Fe cation-binding site is contributed by Asp-316. The segment at 341-364 (PRSRWPLDEKSAPLIGTGRRGTKA) is disordered.

Belongs to the KAE1 / TsaD family. Requires Fe(2+) as cofactor.

It is found in the cytoplasm. It carries out the reaction L-threonylcarbamoyladenylate + adenosine(37) in tRNA = N(6)-L-threonylcarbamoyladenosine(37) in tRNA + AMP + H(+). Required for the formation of a threonylcarbamoyl group on adenosine at position 37 (t(6)A37) in tRNAs that read codons beginning with adenine. Is involved in the transfer of the threonylcarbamoyl moiety of threonylcarbamoyl-AMP (TC-AMP) to the N6 group of A37, together with TsaE and TsaB. TsaD likely plays a direct catalytic role in this reaction. In Bartonella henselae (strain ATCC 49882 / DSM 28221 / CCUG 30454 / Houston 1) (Rochalimaea henselae), this protein is tRNA N6-adenosine threonylcarbamoyltransferase.